The sequence spans 81 residues: Three-finger toxin A1 (81 aa).

The first 21 residues, 1–21 (MKTLLLTLVVVTIVCLDFGHT), serve as a signal peptide directing secretion. 4 disulfide bridges follow: C24–C43, C38–C60, C62–C73, and C74–C79.

Belongs to the three-finger toxin family. Short-chain subfamily. Type I alpha-neurotoxin sub-subfamily. Expressed by the venom gland.

Its subcellular location is the secreted. Its function is as follows. Binds and inhibits fetal (alpha-1-beta-1-gamma-delta/CHRNA1-CHRNB1-CHRNG-CHRND, IC(50)=1.4 nM), adult (alpha-1-beta-1-delta-epsilon/CHRNA1-CHRNB1-CHRND-CHRNE, IC(50)=12 nM) and neuronal alpha-7/CHRNA7 (IC(50)=400 nM) nicotinic acetylcholine receptors (nAChR) thereby impairing neuromuscular and neuronal transmissions. This chain is Three-finger toxin A1, found in Micrurus laticollaris (Balsas coral snake).